We begin with the raw amino-acid sequence, 557 residues long: MALSTFKREHIKKNLRNDEYDLVIIGGGITGAGIALDASERGMKVALVEMQDFAQGTSSRSTKLVHGGLRYLKQFQIGVVAETGKERAIVYENGPHVTTPEWMLLPMHKGGTFGKFSTSIGLGMYDRLAGVKKSERKKMLSKKETLAKEPLVKKEGLKGGGYYVEYRTDDARLTIEVMKRAAEKGAEIINYTKSEHFTYDKNQQVNGVKVIDKLTNENYTIKAKKVVNAAGPWVDDVRSGDYARNNKKLRLTKGVHVVIDQSKFPLGQAVYFDTEKDGRMIFAIPREGKAYVGTTDTFYDNIKSSPLTTQEDRDYLIDAINYMFPSVNVTDEDIESTWAGIRPLIYEEGKDPSEISRKDEIWEGKSGLLTIAGGKLTGYRHMAQDIVDLVSKRLKKDYGLTFSPCNTKGLAISGGDVGGSKNFDAFVEQKVDVAKGFGIDEDVARRLASKYGSNVDELFNIAQTSQYHDSKLPLEIYVELVYSIQQEMVYKPNDFLVRRSGKMYFNIKDVLDYKDAVIDIMADMLDYSPAQIEAYTEEVEQAIKEAQHGNNQPAVKE.

Position 21–49 (21–49 (DLVIIGGGITGAGIALDASERGMKVALVE)) interacts with FAD.

Belongs to the FAD-dependent glycerol-3-phosphate dehydrogenase family. FAD is required as a cofactor.

The protein resides in the cytoplasm. It catalyses the reaction a quinone + sn-glycerol 3-phosphate = dihydroxyacetone phosphate + a quinol. It functions in the pathway polyol metabolism; glycerol degradation via glycerol kinase pathway; glycerone phosphate from sn-glycerol 3-phosphate (aerobic route): step 1/1. The polypeptide is Aerobic glycerol-3-phosphate dehydrogenase (glpD) (Staphylococcus aureus (strain USA300)).